The following is a 217-amino-acid chain: Thiopurine S-methyltransferase (217 aa).

Residues W10, L45, E66, and R123 each coordinate S-adenosyl-L-methionine.

It belongs to the class I-like SAM-binding methyltransferase superfamily. TPMT family.

Its subcellular location is the cytoplasm. It carries out the reaction S-adenosyl-L-methionine + a thiopurine = S-adenosyl-L-homocysteine + a thiopurine S-methylether.. In Pseudomonas fluorescens (strain Pf0-1), this protein is Thiopurine S-methyltransferase.